The sequence spans 217 residues: MANQEIFDKLRDAIVNQNVAGTPELCKEALAAGVPALDIITKGLSVGMKIVGDKFEAAEIFLPQIMMSGKAMSNAMEVLTPELEKNKKEGEEAGLAITFVAEGDIHDIGHRLVTTMLGANGFQIVDLGVDVLNENVVEEAAKHKGEKVLLVGSALMTTSMLGQKDLMDRLNEEKLRDSVKCMFGGAPVSDKWIEEIGADATAENAAEAAKVALEVMK.

One can recognise a B12-binding N-terminal domain in the interval 1–91 (MANQEIFDKL…ELEKNKKEGE (91 aa)). Residues 93 to 217 (AGLAITFVAE…AAKVALEVMK (125 aa)) form the B12-binding domain. His-106 lines the methylcob(III)alamin pocket.

In terms of assembly, can form a complex with MtmB.

Its pathway is one-carbon metabolism; methanogenesis from methylamine. In terms of biological role, acts as a methyl group carrier between MtmB and MtbA. The protein is Monomethylamine corrinoid protein 1 (mtmC1) of Methanosarcina barkeri.